We begin with the raw amino-acid sequence, 842 residues long: MQEVHQTPMMKQYFSIKADYPDAFLFYRLGDFYELFFEDAQIVAKELELTLTSKNGKQAEHPIPMCGVPHHSAAIYIEQLIEKGFNVAICEQTEDPKATKGLVKREVIQVITPGTYMASLSEKENRYLVAISDVAGRFGIARGDVTTGESWLTTLSSEEAVLREIEGLLPNEVIVEDERLADLLRQTGIPLSIQVDKRESTLAQGAKDEAQRSAFELLFAYLTKTQKRSLDHLQPAVAYEVEQHMQLDANTARNLELFRSARSGERKGSLLSLLDETTTAMGGRLLKRWLEQPLYTEQGIRERQDAVENLVDDFMLRDQLQEELKRVYDIERLVAKVGYGTANARDLVQLRDTLERMPSVRSLLQTVKADRLQQIEQNLDSFETLSEQLRAALVDSPPISTKEGGMIRHGYSDELDELLEAKANGKSWIANLEQQERIATGIKSLKVGYNRVFGYYLEVTKANAKLLEEGRYERKQTLTNAERYITPELKEKEALILGAEEKSCTLEYDLFVALREEVKTYTKPLQQLARSLSELDVLLALAVVAEKREYVRPVTTSHVQIERGRHPVIETVLPRGEYVANDLTLDDTRQMLLITGPNMSGKSTYMRQFALIAILHQIGSFVPAEAAELPLFDRIFTRIGAADDLVSGQSTFMVEMTETRQAVTEATSNSLILLDEIGRGTSTYDGMALAQAIVEYIASSIGAKTLFSTHYHELTVLEDSIPSLENVHVRAIERDGRVVFLHEVHPGRADKSYGIHVAELAELPDSLIDRARTILSELESEATKPALNEQSAPPQVEEVSQLSLFESNDAVREQLLKLDLLAMNPIEAMQALYELQQTAKKG.

Residue 596–603 (GPNMSGKS) participates in ATP binding.

This sequence belongs to the DNA mismatch repair MutS family.

In terms of biological role, this protein is involved in the repair of mismatches in DNA. It is possible that it carries out the mismatch recognition step. This protein has a weak ATPase activity. This is DNA mismatch repair protein MutS from Exiguobacterium sp. (strain ATCC BAA-1283 / AT1b).